We begin with the raw amino-acid sequence, 301 residues long: Sulfate adenylyltransferase subunit 2 (301 aa).

The protein belongs to the PAPS reductase family. CysD subfamily. As to quaternary structure, heterodimer composed of CysD, the smaller subunit, and CysN.

It carries out the reaction sulfate + ATP + H(+) = adenosine 5'-phosphosulfate + diphosphate. It participates in sulfur metabolism; hydrogen sulfide biosynthesis; sulfite from sulfate: step 1/3. Functionally, with CysN forms the ATP sulfurylase (ATPS) that catalyzes the adenylation of sulfate producing adenosine 5'-phosphosulfate (APS) and diphosphate, the first enzymatic step in sulfur assimilation pathway. APS synthesis involves the formation of a high-energy phosphoric-sulfuric acid anhydride bond driven by GTP hydrolysis by CysN coupled to ATP hydrolysis by CysD. The chain is Sulfate adenylyltransferase subunit 2 from Shewanella woodyi (strain ATCC 51908 / MS32).